Consider the following 1645-residue polypeptide: Histone-lysine N-methyltransferase set-26 (1645 aa).

Disordered stretches follow at residues 1–82, 109–132, 200–228, 417–606, and 651–789; these read MADG…QQIP, EPAA…RPTE, DAVG…SVAP, TPEQ…VLRP, and TGQS…DEAA. Composition is skewed to low complexity over residues 16–31 and 67–82; these read EQPP…AEPI and QEFY…QQIP. Residues 207–228 are compositionally biased toward polar residues; it reads PGTQYRRNQQTGGGLPSTSVAP. Low complexity-rich tracts occupy residues 429 to 443 and 453 to 467; these read RQRA…AAQR and RPGA…PSMA. The span at 559-578 shows a compositional bias: basic and acidic residues; the sequence is MTQEEKNAHFARLTTDKEKP. Pro residues predominate over residues 592–603; that stretch reads PHVPPPPPPPLV. The span at 651–675 shows a compositional bias: polar residues; it reads TGQSGSSAAARQRTVSGSAARAQTY. Basic residues-rich tracts occupy residues 684-699 and 731-741; these read QHHH…RHSS and HRPRGRPKGTR. The span at 780–789 shows a compositional bias: acidic residues; the sequence is SESEGIDEAA. A PHD-type zinc finger spans residues 794 to 842; that stretch reads TMRCHCGMDHGDGDTIECEGCKTWQHMACMGLTLKSNTSKYKCEMCLPR. The segment at 865-904 is disordered; that stretch reads AAKKQKRKSEPVEQKQKSQPSTSRKSAPMALQQQPAEPRV. Over residues 881 to 899 the composition is skewed to polar residues; the sequence is KSQPSTSRKSAPMALQQQP. The region spanning 973-1064 is the SET domain; the sequence is MSNEVKRQPG…RNTEVTLPFD (92 aa). Over residues 1099–1172 the composition is skewed to basic and acidic residues; the sequence is RHRAMDHKKR…EAKERKKMEV (74 aa). 3 disordered regions span residues 1099–1333, 1371–1536, and 1548–1645; these read RHRA…SKNV, SGLL…STEG, and PLDD…TRWN. Residues 1103 to 1217 are a coiled coil; the sequence is MDHKKREAEE…GKRKEARRRS (115 aa). A compositionally biased stretch (low complexity) spans 1173–1183; the sequence is EASAAAAPESS. A compositionally biased stretch (basic and acidic residues) spans 1188–1210; it reads AREERRIQQAEEMFRRQEEEGKR. Composition is skewed to polar residues over residues 1258 to 1268 and 1300 to 1311; these read TTQPSTSSFAT and TVATPKDTTASN. 3 stretches are compositionally biased toward basic and acidic residues: residues 1382–1427, 1434–1450, and 1468–1485; these read SEVR…KKAN, KSEK…EKKP, and KKTE…ESSS. A compositionally biased stretch (polar residues) spans 1554–1565; it reads SSSNTAPTTTIA.

It belongs to the class V-like SAM-binding methyltransferase superfamily. As to expression, expressed both in the germline and in somatic tissues.

It localises to the nucleus. The enzyme catalyses L-lysyl(9)-[histone H3] + 3 S-adenosyl-L-methionine = N(6),N(6),N(6)-trimethyl-L-lysyl(9)-[histone H3] + 3 S-adenosyl-L-homocysteine + 3 H(+). In terms of biological role, histone methyltransferase that mediates trimethylation of 'Lys-9' of histone H3 in vitro. Involved in transcriptional regulation. Plays a role in the negative regulation of lifespan and in heat resistance. Together with set-9, negatively regulates lifespan in a germline-independent, partially daf-16-dependent fashion. Together with set-9, plays a role in germline development and maintenance and might play a role in the restriction of the trimethylation mark on histone H3 'Lys-4'(H3K4me3) to target genes specifically in the germline. Together with spr-5, required for transgenerational fertility. This Caenorhabditis elegans protein is Histone-lysine N-methyltransferase set-26.